We begin with the raw amino-acid sequence, 525 residues long: Vesicular inhibitory amino acid transporter (525 aa).

The Cytoplasmic segment spans residues 1–132; it reads MATLLRSKLT…WNVTNAIQGM (132 aa). A helical transmembrane segment spans residues 133 to 153; that stretch reads FVLGLPYAILHGGYLGLFLII. The Lumenal, vesicle segment spans residues 154–204; sequence FAAVVCCYTGKILIACLYEENEDGEVVRVRDSYVAIANACCAPRFPTLGGR. The residue at position 186 (Tyr186) is a 3'-nitrotyrosine. The chain crosses the membrane as a helical span at residues 205-225; sequence VVNVAQIIELVMTCILYVVVS. The Cytoplasmic segment spans residues 226 to 265; the sequence is GNLMYNSFPGLPVSQKSWSIIATAVLLPCAFLKNLKAVSK. The helical transmembrane segment at 266-286 threads the bilayer; that stretch reads FSLLCTLAHFVINILVIAYCL. Topologically, residues 287–305 are lumenal, vesicle; sequence SRARDWAWEKVKFYIDVKK. A helical transmembrane segment spans residues 306 to 326; that stretch reads FPISIGIIVFSYTSQIFLPSL. Residues 327–341 are Cytoplasmic-facing; sequence EGNMQQPSEFHCMMN. Residues 342–362 form a helical membrane-spanning segment; the sequence is WTHIAACVLKGLFALVAYLTW. The Lumenal, vesicle portion of the chain corresponds to 363–383; that stretch reads ADETKEVITDNLPGSIRAVVN. Residues 384 to 404 traverse the membrane as a helical segment; sequence LFLVAKALLSYPLPFFAAVEV. Residues 405–438 are Cytoplasmic-facing; that stretch reads LEKSLFQEGSRAFFPACYGGDGRLKSWGLTLRCA. Residues 439-459 traverse the membrane as a helical segment; it reads LVVFTLLMAIYVPHFALLMGL. Over 460–461 the chain is Lumenal, vesicle; the sequence is TG. Residues 462–482 traverse the membrane as a helical segment; that stretch reads SLTGAGLCFLLPSLFHLRLLW. Residues 483–489 lie on the Cytoplasmic side of the membrane; that stretch reads RKLLWHQ. The chain crosses the membrane as a helical span at residues 490 to 510; sequence VFFDVAIFVIGGICSVSGFVH. At 511–525 the chain is on the lumenal, vesicle side; the sequence is SLEGLIEAYRTNAED.

Belongs to the amino acid/polyamine transporter 2 family. Brain and retina. Localized in horizontal cell tips at both rod and cone terminals.

The protein localises to the cytoplasmic vesicle membrane. Its subcellular location is the presynapse. It catalyses the reaction 4-aminobutanoate(out) + n H(+)(in) = 4-aminobutanoate(in) + n H(+)(out). The enzyme catalyses glycine(out) + n H(+)(in) = glycine(in) + n H(+)(out). The catalysed reaction is beta-alanine(out) + n H(+)(in) = beta-alanine(in) + n H(+)(out). Chloride ions activate 4-aminobutanoate/H(+) transport. Antiporter that exchanges vesicular protons for cytosolic 4-aminobutanoate or to a lesser extend glycine, thus allowing their secretion from nerve terminals. The transport is equally dependent on the chemical and electrical components of the proton gradient. May also transport beta-alanine. Acidification of GABAergic synaptic vesicles is a prerequisite for 4-aminobutanoate uptake. The sequence is that of Vesicular inhibitory amino acid transporter from Mus musculus (Mouse).